A 607-amino-acid chain; its full sequence is Elongation factor 4 (607 aa).

A tr-type G domain is found at 11 to 193; sequence SKIRNFSIIA…QIVEKVPAPA (183 aa). GTP is bound by residues 23 to 28 and 140 to 143; these read DHGKST and NKID.

The protein belongs to the TRAFAC class translation factor GTPase superfamily. Classic translation factor GTPase family. LepA subfamily.

The protein localises to the cell membrane. The catalysed reaction is GTP + H2O = GDP + phosphate + H(+). Required for accurate and efficient protein synthesis under certain stress conditions. May act as a fidelity factor of the translation reaction, by catalyzing a one-codon backward translocation of tRNAs on improperly translocated ribosomes. Back-translocation proceeds from a post-translocation (POST) complex to a pre-translocation (PRE) complex, thus giving elongation factor G a second chance to translocate the tRNAs correctly. Binds to ribosomes in a GTP-dependent manner. This chain is Elongation factor 4, found in Bacillus cereus (strain B4264).